Consider the following 478-residue polypeptide: Catalase easC (478 aa).

His-54 is an active-site residue. Tyr-343 lines the heme pocket. A disordered region spans residues 459 to 478; that stretch reads VAEKARPDSPSRAQPGQLRL.

The protein belongs to the catalase family. Heme serves as cofactor.

It participates in alkaloid biosynthesis; ergot alkaloid biosynthesis. Functionally, catalase; part of the gene cluster that mediates the biosynthesis of fungal ergot alkaloid. DmaW catalyzes the first step of ergot alkaloid biosynthesis by condensing dimethylallyl diphosphate (DMAP) and tryptophan to form 4-dimethylallyl-L-tryptophan. The second step is catalyzed by the methyltransferase easF that methylates 4-dimethylallyl-L-tryptophan in the presence of S-adenosyl-L-methionine, resulting in the formation of 4-dimethylallyl-L-abrine. The catalase easC and the FAD-dependent oxidoreductase easE then transform 4-dimethylallyl-L-abrine to chanoclavine-I which is further oxidized by easD in the presence of NAD(+), resulting in the formation of chanoclavine-I aldehyde. Chanoclavine-I aldehyde is the precursor of ergoamides and ergopeptines in Clavicipitaceae, and clavine-type alcaloids such as fumiclavine in Trichocomaceae. However, the metabolites downstream of chanoclavine-I aldehyde in Arthrodermataceae have not been identified yet. In Trichophyton verrucosum (strain HKI 0517), this protein is Catalase easC.